The primary structure comprises 60 residues: Large ribosomal subunit protein uL30 (60 aa).

Belongs to the universal ribosomal protein uL30 family. As to quaternary structure, part of the 50S ribosomal subunit.

This chain is Large ribosomal subunit protein uL30, found in Streptococcus equi subsp. equi (strain 4047).